Here is a 255-residue protein sequence, read N- to C-terminus: MQQEEIIEGYYGASKGLKKSGIYAKLDFLQSATGLILALFMIAHMFLVSSILISDEAMYKVAKFFEGSLFLKAGEPAIVSVVAAGIILILVAHAFLALRKFPINYRQYKVFKTHKHLMKHGDTSLWFIQALTGFAMFFLASIHLFVMLTEPESIGPHGSSYRFVTQNFWLLYIFLLFAVELHGSIGLYRLAIKWGWFKNVSIQGLRKVKWAMSVFFIVLGLCTYGAYIKKGLENKENGIKTMQEAIEADGKFHKE.

Helical transmembrane passes span 33–53 (TGLI…SILI), 78–98 (IVSV…FLAL), 126–146 (WFIQ…HLFV), 168–188 (FWLL…IGLY), and 208–228 (VKWA…GAYI). Residues H44, H93, H143, and H182 each coordinate heme b.

The protein belongs to the diheme cytochrome b FrdC family. Part of an enzyme complex containing three subunits: a flavoprotein (frdA), an iron-sulfur protein (frdB), and diheme cytochrome b (frdC). Heme b is required as a cofactor.

The protein localises to the cell inner membrane. Its function is as follows. The fumarate reductase enzyme complex is required for fumarate respiration. This subunit anchors the complex in the membrane and binds a diheme cytochrome b. The chain is Fumarate reductase cytochrome b subunit (frdC) from Helicobacter pylori (strain ATCC 700392 / 26695) (Campylobacter pylori).